A 96-amino-acid chain; its full sequence is Growth-regulated alpha protein (96 aa).

Positions 1–24 (MIPATRSLLCAALLLLATSRLATG) are cleaved as a signal peptide. 2 cysteine pairs are disulfide-bonded: C33-C59 and C35-C75.

Belongs to the intercrine alpha (chemokine CxC) family. In terms of processing, the N-terminal processed form KC(5-72) is produced by proteolytic cleavage after secretion from bone marrow stromal cells.

Its subcellular location is the secreted. Has chemotactic activity for neutrophils. Contributes to neutrophil activation during inflammation. Hematoregulatory chemokine, which, in vitro, suppresses hematopoietic progenitor cell proliferation. KC(5-72) shows a highly enhanced hematopoietic activity. The sequence is that of Growth-regulated alpha protein (Cxcl1) from Mus musculus (Mouse).